Here is a 748-residue protein sequence, read N- to C-terminus: Catalase-peroxidase 2 (748 aa).

Residues 1-24 are compositionally biased toward polar residues; it reads MSSDTSDSRPPNPDTKTASTSESE. The tract at residues 1–43 is disordered; the sequence is MSSDTSDSRPPNPDTKTASTSESENPAIPSPKPKSGAPLRNQD. Residues 113-238 constitute a cross-link (tryptophyl-tyrosyl-methioninium (Trp-Tyr) (with M-264)); it reads WHSAGTYRIH…YGATTMGLIY (126 aa). The active-site Proton acceptor is the His114. The tryptophyl-tyrosyl-methioninium (Tyr-Met) (with W-113) cross-link spans 238 to 264; the sequence is YVNPEGPEGQPDPLAAAHDIRETFGRM. A heme b-binding site is contributed by His279.

This sequence belongs to the peroxidase family. Peroxidase/catalase subfamily. As to quaternary structure, homotetramer. It depends on heme b as a cofactor. Formation of the three residue Trp-Tyr-Met cross-link is important for the catalase, but not the peroxidase activity of the enzyme.

It catalyses the reaction H2O2 + AH2 = A + 2 H2O. The enzyme catalyses 2 H2O2 = O2 + 2 H2O. Functionally, bifunctional enzyme with both catalase and broad-spectrum peroxidase activity. May play a role in the intracellular survival of mycobacteria. The polypeptide is Catalase-peroxidase 2 (Mycolicibacterium smegmatis (strain ATCC 700084 / mc(2)155) (Mycobacterium smegmatis)).